The sequence spans 691 residues: Two-component response regulator ORR21 (691 aa).

In terms of domain architecture, Response regulatory spans 17–132 (KVLVVDDDPT…ELKNIWQHVI (116 aa)). At aspartate 68 the chain carries 4-aspartylphosphate. Over residues 139–155 (NKEHEHSGSLDDTDRTR) the composition is skewed to basic and acidic residues. The segment at 139–204 (NKEHEHSGSL…DPSSTSKKPR (66 aa)) is disordered. Residues 199–258 (TSKKPRVVWSVELHQQFVNAVNHLGIDKAVPKKILELMNVPGLTRENVASHLQKFRLYLK) constitute a DNA-binding region (myb-like GARP).

Belongs to the ARR family. Type-B subfamily. Post-translationally, two-component system major event consists of a His-to-Asp phosphorelay between a sensor histidine kinase (HK) and a response regulator (RR). In plants, the His-to-Asp phosphorelay involves an additional intermediate named Histidine-containing phosphotransfer protein (HPt). This multistep phosphorelay consists of a His-Asp-His-Asp sequential transfer of a phosphate group between first a His and an Asp of the HK protein, followed by the transfer to a conserved His of the HPt protein and finally the transfer to an Asp in the receiver domain of the RR protein.

It localises to the nucleus. Its function is as follows. Transcriptional activator that binds specific DNA sequence. Functions as a response regulator involved in His-to-Asp phosphorelay signal transduction system. Phosphorylation of the Asp residue in the receiver domain activates the ability of the protein to promote the transcription of target genes. May directly activate some type-A response regulators in response to cytokinins. This is Two-component response regulator ORR21 from Oryza sativa subsp. japonica (Rice).